The chain runs to 326 residues: G-protein coupled receptor 1 (326 aa).

N-acetylserine is present on Ser2. The Extracellular portion of the chain corresponds to 2-23; the sequence is SAVLTAGGGLTAGDRSIITAIN. The chain crosses the membrane as a helical span at residues 24 to 44; the sequence is TGASSLSFVGSAFIVLCYCLF. At 45–51 the chain is on the cytoplasmic side; sequence KELRKFS. A helical membrane pass occupies residues 52-72; sequence FKLVFYLALSDMLCSFFLIVG. Topologically, residues 73-84 are extracellular; the sequence is DPSKGFICYAQG. Residues Cys80 and Cys151 are joined by a disulfide bond. The helical transmembrane segment at 85 to 105 threads the bilayer; that stretch reads YTTHFFCVASFLWTTTIAFTL. Over 106 to 120 the chain is Cytoplasmic; the sequence is HRTVVKHKTDVEDLE. Residues 121-141 form a helical membrane-spanning segment; that stretch reads AMFHLYVWGTSLVVTVIRSFG. The Extracellular portion of the chain corresponds to 142-160; that stretch reads NNHSHLGPWCWTQTGLKGK. Asn143 carries N-linked (GlcNAc...) asparagine glycosylation. Residues 161–181 form a helical membrane-spanning segment; that stretch reads AVHFLTFYAPLWGAILYNGFT. At 182–213 the chain is on the cytoplasmic side; sequence YFQVIRMLRNARRMAVGMSDRVDQFDNRAELK. Residues 214 to 234 traverse the membrane as a helical segment; the sequence is VLNRWGYYPLILIGSWAFGTI. At 235-246 the chain is on the extracellular side; that stretch reads NRIHDFIEPGHK. A helical membrane pass occupies residues 247-267; sequence IFWLSVLDVGTAALMGLFNSI. At 268–326 the chain is on the cytoplasmic side; it reads AYGFNSSVRRAIHERLELFLPERLYRWLPSNFRPKNHLILHQQQQQRSEMVSLKTEDQQ.

Belongs to the G-protein coupled receptor 2 family. Interacts with GPA1. As to expression, mostly present in the meristematic regions. Expressed at low levels in seedlings, vascular tissues of cotyledons, hypocotyl, and roots, stems, leaves, flowering buds and siliques. In dark-grown seedlings, localized in the cotyledons and the hook.

It localises to the cell membrane. Its function is as follows. Together with GPA1, may regulate the cell cycle via a signaling cascade that uses phosphatidylinositol-specific phospholipase C (PI-PLC) as an effector and inositol 1,4,5-trisphosphate(IP(3)) as a second messenger. Promotes PI-PLC activity and IP(3) accumulation. Involved in the blue light (BL) signaling. Together with GPA1 and ADT3, required for BL-mediated synthesis of phenylpyruvate and subsequently of phenylalanine (Phe), in etiolated seedlings. Probably involved in cytokinin signal transduction. Plays a positive role in gibberellin- (GA) and brassinosteroid- (BR) regulated seed germination, probably independently of a heterotrimeric G-protein. Mediates seed dormancy abolition, and promotes seed germination and flowering. In Arabidopsis thaliana (Mouse-ear cress), this protein is G-protein coupled receptor 1 (GCR1).